Here is a 311-residue protein sequence, read N- to C-terminus: Non-homologous end joining protein Ku (311 aa).

The Ku domain maps to Ile26–Ala210. The interval Ala269–Ser311 is disordered. Over residues Pro282–Lys293 the composition is skewed to low complexity. Residues Lys301–Ser311 are compositionally biased toward basic residues.

The protein belongs to the prokaryotic Ku family. In terms of assembly, homodimer. Interacts with LigD.

The protein resides in the spore core. In terms of biological role, with LigD forms a non-homologous end joining (NHEJ) DNA repair enzyme, which repairs dsDNA breaks with reduced fidelity. Binds linear dsDNA with 5'- and 3'- overhangs but not closed circular dsDNA nor ssDNA. Recruits and stimulates the ligase activity of LigD. Probably involved in DNA repair during spore germination. This Bacillus subtilis (strain 168) protein is Non-homologous end joining protein Ku.